A 632-amino-acid polypeptide reads, in one-letter code: DNA gyrase subunit B (632 aa).

The 115-residue stretch at 419-533 folds into the Toprim domain; that stretch reads RELFIVEGES…SGYLYIAQPP (115 aa). 3 residues coordinate Mg(2+): Glu425, Asp498, and Asp500.

This sequence belongs to the type II topoisomerase GyrB family. As to quaternary structure, heterotetramer, composed of two GyrA and two GyrB chains. In the heterotetramer, GyrA contains the active site tyrosine that forms a transient covalent intermediate with DNA, while GyrB binds cofactors and catalyzes ATP hydrolysis. Mg(2+) serves as cofactor. It depends on Mn(2+) as a cofactor. The cofactor is Ca(2+).

The protein resides in the cytoplasm. It carries out the reaction ATP-dependent breakage, passage and rejoining of double-stranded DNA.. A type II topoisomerase that negatively supercoils closed circular double-stranded (ds) DNA in an ATP-dependent manner to modulate DNA topology and maintain chromosomes in an underwound state. Negative supercoiling favors strand separation, and DNA replication, transcription, recombination and repair, all of which involve strand separation. Also able to catalyze the interconversion of other topological isomers of dsDNA rings, including catenanes and knotted rings. Type II topoisomerases break and join 2 DNA strands simultaneously in an ATP-dependent manner. In Archaeoglobus fulgidus (strain ATCC 49558 / DSM 4304 / JCM 9628 / NBRC 100126 / VC-16), this protein is DNA gyrase subunit B.